We begin with the raw amino-acid sequence, 544 residues long: Homeobox protein B-H1 (544 aa).

A compositionally biased stretch (low complexity) spans 53 to 70 (STTTMSSGGSTTTASGIG). 4 disordered regions span residues 53–73 (STTT…GKPN), 92–179 (YKQQ…PPTA), 236–308 (GGVG…AFTD), and 471–544 (AANP…QIQV). Residues 95–105 (QQHHQQLHHHN) are compositionally biased toward basic residues. Low complexity predominate over residues 106–131 (NNNNSGSSGGSSPAHSNNNNNINGDN). The segment covering 156 to 172 (THPHTHPHALMHPHGKL) has biased composition (basic residues). Positions 247–262 (DLDDSSDYHEENEDCD) are enriched in acidic residues. The segment covering 266-282 (MDDHSVCSNGGKDDDGN) has biased composition (basic and acidic residues). The span at 283-293 (SVKSGSTSDMS) shows a compositional bias: polar residues. Positions 299-358 (QRKARTAFTDHQLQTLEKSFERQKYLSVQERQELAHKLDLSDCQVKTWYQNRRTKWKRQT) form a DNA-binding region, homeobox. The segment covering 476-485 (GPHPVAPPPS) has biased composition (pro residues). Low complexity predominate over residues 492-506 (PSGLVKPIPAHSASA). A compositionally biased stretch (pro residues) spans 507-516 (SPPPRPPSTP).

This sequence belongs to the Antp homeobox family. In terms of tissue distribution, B-H1 and B-H2 are abundant in the eye-antenna imaginal disk. Expressed in R1 and R6 cells throughout larval stage until 30 hours after puparium formation, at which time expression is seen in the anterior and posterior primary pigment cells. Coexpressed in embryonic glial cells, neurons of the CNS and PNS, most latitudinal anterior cells of the developing notum and the central circular region of the leg and antennal imaginal disk throughout larval development.

The protein localises to the nucleus. In terms of biological role, B-H1 and B-H2 are regulated by members of the wg signaling pathway; wg and dpp. B-H1 and B-H2 are coexpressed and functionally required in R1 and R6 receptor cells and primary pigment cells for normal eye development. Coexpression is also required for the fate determination of external sensory organs, formation of notal microchaetae, formation of presutural macrochaetae, antennal development and for distal leg morphogenesis; segmentation and specification of tarsal segments 3-5. This is Homeobox protein B-H1 (B-H1) from Drosophila melanogaster (Fruit fly).